The sequence spans 385 residues: MNSLDLPKPPHETRVVVAMSGGVDSSVVAGLLKREGYDVVGVTLQLYDHGAATHRKGACCAGRDIHDARAVAETLGIPHYVLDYEDRFRESVIDRFAESYLSGETPIPCVECNRSVKFRDLLGMARDLGAEALATGHYVASRAQPEGGRALYRALDPARDQSYFLYATTPEQLAFLRFPLGERPKDETRALARELGLAVADKADSQDICFVPQGGYADVIAKLRPEAARPGEIVDLDGRRLGEHEGIIHYTVGQRRGLKLSVGEPLYVVRLEPETARVVVGPRAALATRRIRLTDLNWLGSRAPDGLADLPVAVRVRSTREPRPARLSWNAAEACLEVELVVPEDGVSPGQACVIYADDGPRAQVLGGGTIRRIGALQAGAAEAA.

ATP is bound by residues 18–25 and leucine 44; that span reads AMSGGVDS. Catalysis depends on cysteine 112, which acts as the Nucleophile. Cysteine 112 and cysteine 209 form a disulfide bridge. An ATP-binding site is contributed by glycine 136. Positions 159-161 are interaction with tRNA; that stretch reads RDQ. Cysteine 209 functions as the Cysteine persulfide intermediate in the catalytic mechanism.

It belongs to the MnmA/TRMU family.

The protein resides in the cytoplasm. The catalysed reaction is S-sulfanyl-L-cysteinyl-[protein] + uridine(34) in tRNA + AH2 + ATP = 2-thiouridine(34) in tRNA + L-cysteinyl-[protein] + A + AMP + diphosphate + H(+). Functionally, catalyzes the 2-thiolation of uridine at the wobble position (U34) of tRNA, leading to the formation of s(2)U34. This chain is tRNA-specific 2-thiouridylase MnmA, found in Methylorubrum populi (strain ATCC BAA-705 / NCIMB 13946 / BJ001) (Methylobacterium populi).